Reading from the N-terminus, the 3130-residue chain is DNA polymerase zeta catalytic subunit (3130 aa).

Disordered regions lie at residues 263-295 (AIWEDEKQRRRNRNETSQMSQPESQDHRFVPAT), 425-457 (GYRGERNRMPSPCRSFGNNKYPQNSDDEENEPQ), 487-510 (LCRNTHRSSTEDDDSSSGEEMEWS), 524-548 (LDGTADENSDNPLNNENSRTHSSVI), 697-728 (PNENTLGKNSFNFSDLNHSKNKVSSEGNEKGN), and 817-871 (VTYK…EKDN). The span at 286–295 (SQDHRFVPAT) shows a compositional bias: basic and acidic residues. A compositionally biased stretch (acidic residues) spans 497–509 (EDDDSSSGEEMEW). Composition is skewed to polar residues over residues 533 to 548 (DNPLNNENSRTHSSVI) and 699 to 728 (ENTLGKNSFNFSDLNHSKNKVSSEGNEKGN). The span at 828-838 (SRLKLNKRKLA) shows a compositional bias: basic residues. Residues 842–854 (ETSTKSSETGSTK) are compositionally biased toward low complexity. A compositionally biased stretch (polar residues) spans 855–866 (DNFIQNNPCNSN). Ser-1030 is subject to Phosphoserine. Disordered regions lie at residues 1035–1095 (YPIY…YNAE), 1162–1231 (SRIG…DEKI), and 1537–1600 (RQQK…KLLK). Phosphothreonine is present on Thr-1041. Basic residues-rich tracts occupy residues 1043–1061 (KKSHRRKSKHKSAKKKTGK) and 1166–1179 (KTSRARAQIKKSKA). Over residues 1213–1231 (KTNEKGTSRKHTTLKDEKI) the composition is skewed to basic and acidic residues. The segment covering 1540-1565 (KAQNANTTQDPLSNKHQPNKNISGSL) has biased composition (polar residues). Over residues 1570 to 1589 (ANKRTRSVTSPRKPRTPRST) the composition is skewed to basic residues. Residues 1590–1600 (KQKEKIPKLLK) show a composition bias toward basic and acidic residues. Phosphoserine is present on Ser-1724. 5 disordered regions span residues 1845–1882 (NDMLTPTPDSSPRSTSSPSQSKNGSFTPRTANILKPLM), 1962–1984 (NPRPGSPLRSGQGVVNKGSSNSP), 2017–2050 (ERSKKLPKTKPTGVVKSAENFSSSVNPDDKPVVP), 2080–2150 (PTTG…SPVE), and 2216–2236 (APGLSPLSTEPKTQKLSNKKG). A mediates interaction with MAD2L2 region spans residues 1847-1898 (MLTPTPDSSPRSTSSPSQSKNGSFTPRTANILKPLMSPPSREEIMATLLDHD). Over residues 1849-1865 (TPTPDSSPRSTSSPSQS) the composition is skewed to low complexity. Phosphoserine is present on Ser-1967. Polar residues predominate over residues 2080 to 2092 (PTTGCSQTASESQ). Low complexity predominate over residues 2113–2122 (YYISYSSPDS). Over residues 2221–2236 (PLSTEPKTQKLSNKKG) the composition is skewed to polar residues. 4 residues coordinate Zn(2+): Cys-3042, Cys-3045, Cys-3054, and Cys-3057. The CysA-type zinc-finger motif lies at 3042-3057 (CPVCDDLTQHGICSKC). 4 residues coordinate [4Fe-4S] cluster: Cys-3086, Cys-3089, Cys-3099, and Cys-3104. A CysB motif motif is present at residues 3086–3104 (CKNCTGCFDRHIPCVSLNC).

The protein belongs to the DNA polymerase type-B family. In terms of assembly, heterodimer with MAD2L2. This dimer forms the minimal DNA polymerase zeta complex (Pol-zeta2), with REV3L bearing DNA polymerase catalytic activity, although its activity is very low in this context. Component of the tetrameric Pol-zeta complex (Pol-zeta4), which consists of REV3L, MAD2L2, POLD2 and POLD3; Pol-zeta4 is the fully active form of DNA polymerase zeta. It depends on [4Fe-4S] cluster as a cofactor. In terms of tissue distribution, ubiquitously expressed.

The protein localises to the nucleus. The catalysed reaction is DNA(n) + a 2'-deoxyribonucleoside 5'-triphosphate = DNA(n+1) + diphosphate. In terms of biological role, catalytic subunit of the DNA polymerase zeta complex, an error-prone polymerase specialized in translesion DNA synthesis (TLS). Lacks an intrinsic 3'-5' exonuclease activity and thus has no proofreading function. In Homo sapiens (Human), this protein is DNA polymerase zeta catalytic subunit (REV3L).